Here is a 298-residue protein sequence, read N- to C-terminus: Acetylglutamate kinase (298 aa).

Substrate-binding positions include 69–70, R91, and N196; that span reads GG.

Belongs to the acetylglutamate kinase family. ArgB subfamily.

Its subcellular location is the cytoplasm. It carries out the reaction N-acetyl-L-glutamate + ATP = N-acetyl-L-glutamyl 5-phosphate + ADP. Its pathway is amino-acid biosynthesis; L-arginine biosynthesis; N(2)-acetyl-L-ornithine from L-glutamate: step 2/4. Its function is as follows. Catalyzes the ATP-dependent phosphorylation of N-acetyl-L-glutamate. The protein is Acetylglutamate kinase of Rhodopseudomonas palustris (strain BisB5).